The chain runs to 353 residues: Mitogen-activated protein kinase mpkB (353 aa).

The Protein kinase domain maps to 21–309 (YEIQDVIGEG…VEEALRHPYL (289 aa)). Residues 27-35 (IGEGAYGVV) and lysine 50 each bind ATP. Catalysis depends on aspartate 145, which acts as the Proton acceptor.

It belongs to the protein kinase superfamily. Ser/Thr protein kinase family. MAP kinase subfamily. The cofactor is Mg(2+).

The protein localises to the nucleus. The enzyme catalyses L-seryl-[protein] + ATP = O-phospho-L-seryl-[protein] + ADP + H(+). It catalyses the reaction L-threonyl-[protein] + ATP = O-phospho-L-threonyl-[protein] + ADP + H(+). Its activity is regulated as follows. Activated by threonine and tyrosine phosphorylation. Mitogen-activated protein kinase (MAPK) that plays a role in conidiation and regulation of secondary metabolite biosynthesis. Acts as a repressor of dihydroxynaphthalene (DHN)-melanin production. In Aspergillus fumigatus (strain CBS 144.89 / FGSC A1163 / CEA10) (Neosartorya fumigata), this protein is Mitogen-activated protein kinase mpkB.